The primary structure comprises 76 residues: U14-hexatoxin-Hi1a (76 aa).

The first 18 residues, 1-18, serve as a signal peptide directing secretion; sequence MMQLAVLICLSLVVNTFA. 3 cysteine pairs are disulfide-bonded: cysteine 21-cysteine 34, cysteine 27-cysteine 39, and cysteine 33-cysteine 61.

Expressed by the venom gland.

It is found in the secreted. Probable ion channel inhibitor. This chain is U14-hexatoxin-Hi1a, found in Hadronyche infensa (Fraser island funnel-web spider).